Consider the following 269-residue polypeptide: Serine/threonine-protein kinase ZRK7 (269 aa).

The region spanning 80–269 (FDWSYAIGVD…KNRLMVTVIT (190 aa)) is the Protein kinase domain. ATP is bound by residues 86-94 (IGVDRFVWY) and Lys106. Asp205 functions as the Proton acceptor in the catalytic mechanism.

The protein belongs to the protein kinase superfamily. Ser/Thr protein kinase family. ZRK subfamily.

The catalysed reaction is L-seryl-[protein] + ATP = O-phospho-L-seryl-[protein] + ADP + H(+). It carries out the reaction L-threonyl-[protein] + ATP = O-phospho-L-threonyl-[protein] + ADP + H(+). This is Serine/threonine-protein kinase ZRK7 from Arabidopsis thaliana (Mouse-ear cress).